Reading from the N-terminus, the 32-residue chain is Photosystem II reaction center protein Psb30 (32 aa).

A helical membrane pass occupies residues isoleucine 3 to valine 23.

This sequence belongs to the Psb30/Ycf12 family. As to quaternary structure, PSII is composed of 1 copy each of membrane proteins PsbA, PsbB, PsbC, PsbD, PsbE, PsbF, PsbH, PsbI, PsbJ, PsbK, PsbL, PsbM, PsbT, PsbY, PsbZ, Psb30/Ycf12, peripheral proteins of the oxygen-evolving complex and a large number of cofactors. It forms dimeric complexes.

The protein resides in the plastid. Its subcellular location is the chloroplast thylakoid membrane. In terms of biological role, a core subunit of photosystem II (PSII), probably helps stabilize the reaction center. The polypeptide is Photosystem II reaction center protein Psb30 (Euglena viridis (Cercaria viridis)).